The sequence spans 302 residues: Spermidine synthase (302 aa).

Met1 bears the N-acetylmethionine mark. The PABS domain maps to 18–253; it reads EGWFRETCSL…GQIGFMLCSK (236 aa). Position 49 (Gln49) interacts with S-adenosyl 3-(methylsulfanyl)propylamine. Tyr79 contacts putrescine. S-adenosyl 3-(methylsulfanyl)propylamine contacts are provided by residues Gln80, Asp104, Glu124, 155–156, and Asp173; that span reads DG. Asp173 serves as the catalytic Proton acceptor. Putrescine contacts are provided by residues 173-176 and Tyr241; that span reads DSSD.

This sequence belongs to the spermidine/spermine synthase family. As to quaternary structure, homodimer or homotetramer.

The enzyme catalyses S-adenosyl 3-(methylsulfanyl)propylamine + putrescine = S-methyl-5'-thioadenosine + spermidine + H(+). It functions in the pathway amine and polyamine biosynthesis; spermidine biosynthesis; spermidine from putrescine: step 1/1. Its activity is regulated as follows. The activity is thought to be regulated mainly by the availability of decarboxylated S-adenosylmethionine. Catalyzes the production of spermidine from putrescine and decarboxylated S-adenosylmethionine (dcSAM). Has a strong preference for putrescine as substrate, and has very low activity towards 1,3-diaminopropane. Has extremely low activity towards spermidine. In Mus musculus (Mouse), this protein is Spermidine synthase (Srm).